The sequence spans 509 residues: Bifunctional purine biosynthesis protein PurH (509 aa).

The 145-residue stretch at 1–145 folds into the MGS-like domain; it reads MIKRALISVF…KSFKDVVVIS (145 aa).

This sequence belongs to the PurH family.

The catalysed reaction is (6R)-10-formyltetrahydrofolate + 5-amino-1-(5-phospho-beta-D-ribosyl)imidazole-4-carboxamide = 5-formamido-1-(5-phospho-D-ribosyl)imidazole-4-carboxamide + (6S)-5,6,7,8-tetrahydrofolate. It catalyses the reaction IMP + H2O = 5-formamido-1-(5-phospho-D-ribosyl)imidazole-4-carboxamide. Its pathway is purine metabolism; IMP biosynthesis via de novo pathway; 5-formamido-1-(5-phospho-D-ribosyl)imidazole-4-carboxamide from 5-amino-1-(5-phospho-D-ribosyl)imidazole-4-carboxamide (10-formyl THF route): step 1/1. It functions in the pathway purine metabolism; IMP biosynthesis via de novo pathway; IMP from 5-formamido-1-(5-phospho-D-ribosyl)imidazole-4-carboxamide: step 1/1. This Brachyspira hyodysenteriae (strain ATCC 49526 / WA1) protein is Bifunctional purine biosynthesis protein PurH.